The primary structure comprises 692 residues: MARKTPLNRIRNIGIAAHIDAGKTTTSERILFYTGVSHKIGEVHDGAATMDWMEQEKERGITITSAATTCFWKDHQINLIDTPGHVDFTIEVERSMRVLDGAVSVFCSVGGVQPQSETVWRQANKYGVPRIVFVNKMDRIGANFYSVENQIKQRLKANPVPINIPIGAEDTFIGVIDLVQMKAIVWNNETMGAKYDVEEIPSDLLEKAKQYREKLVEAVAEQDEALMEKYLGGEELSIEEIKKGIKTGCLNMSLVPMLCGSSFKNKGVQTLLDAVIDYLPAPTEVVDIKGIDPKTEEEVFVKSSDDGEFAGLAFKIMTDPFVGQLTFVRVYRGNLESGSYVYNSTKDKKERVGRLLKMHSNKREDIKEVYAGEICAFVGLKDTLTGDTLCDEKNAVVLERMEFPEPVIHIAVEPKTKADQEKMGVALGKLAEEDPSFRVMTQEETGQTLIGGMGELHLEIIVDRLKREFKVEAEIGQPQVAFRETIRSSVSKEHKYAKQSGGRGQYGHVFIKLEPKEPGSGYEFVNEISGGVIPKEYIPAVDKGIQEAMQNGVLAGYPVVDFKVTLYDGSYHDVDSSEMAFKIAGSMAFKEASRAANPVLLEPMMKVEVEVPEEYMGDVIGDLNRRRGQINSMDDRLGLKIVNAFVPLVEMFGYSTDLRSATQGRGTYSMEFDHYGEVPSNIAKEIVEKRKG.

Residues 8 to 283 (NRIRNIGIAA…AVIDYLPAPT (276 aa)) form the tr-type G domain. GTP is bound by residues 17-24 (AHIDAGKT), 81-85 (DTPGH), and 135-138 (NKMD).

It belongs to the TRAFAC class translation factor GTPase superfamily. Classic translation factor GTPase family. EF-G/EF-2 subfamily.

The protein resides in the cytoplasm. Its function is as follows. Catalyzes the GTP-dependent ribosomal translocation step during translation elongation. During this step, the ribosome changes from the pre-translocational (PRE) to the post-translocational (POST) state as the newly formed A-site-bound peptidyl-tRNA and P-site-bound deacylated tRNA move to the P and E sites, respectively. Catalyzes the coordinated movement of the two tRNA molecules, the mRNA and conformational changes in the ribosome. This Helicobacter pylori (strain Shi470) protein is Elongation factor G.